The primary structure comprises 350 residues: Quinolinate phosphoribosyltransferase [decarboxylating] 1b (350 aa).

Substrate-binding positions include Arg-141, 172 to 174 (TRK), Arg-196, Lys-206, Glu-239, Asp-266, 298 to 300 (SGN), and 319 to 321 (SGA).

This sequence belongs to the NadC/ModD family.

It carries out the reaction nicotinate beta-D-ribonucleotide + CO2 + diphosphate = quinolinate + 5-phospho-alpha-D-ribose 1-diphosphate + 2 H(+). It functions in the pathway alkaloid biosynthesis; nicotine biosynthesis. Its pathway is cofactor biosynthesis; NAD(+) biosynthesis; nicotinate D-ribonucleotide from quinolinate: step 1/1. Its function is as follows. Involved in the biosynthesis of pyridine alkaloid natural products, leading mainly to the production of anabasine, anatabine, nicotine and nornicotine, effective deterrents against herbivores with antiparasitic and pesticide properties (neurotoxins); nornicotine serves as the precursor in the synthesis of the carcinogen compound N'-nitrosonornicotine (NNN). Involved in the catabolism of quinolinic acid (QA). The sequence is that of Quinolinate phosphoribosyltransferase [decarboxylating] 1b from Nicotiana tabacum (Common tobacco).